Reading from the N-terminus, the 46-residue chain is Major cold shock protein (46 aa).

The CSD domain occupies 1–46; it reads EKGFGFLTQNNGGADVFVHFRAIASEGFKTLTEGQKVSFDVEQGQK.

In terms of assembly, homodimer.

Its subcellular location is the cytoplasm. The chain is Major cold shock protein (cspA) from Photobacterium leiognathi subsp. mandapamensis (Photobacterium mandapamensis).